Consider the following 80-residue polypeptide: Cell division activator CedA (80 aa).

Belongs to the CedA family.

Activates the cell division inhibited by chromosomal DNA over-replication. The chain is Cell division activator CedA from Salmonella arizonae (strain ATCC BAA-731 / CDC346-86 / RSK2980).